The following is a 110-amino-acid chain: Large ribosomal subunit protein uL24 (110 aa).

It belongs to the universal ribosomal protein uL24 family. Part of the 50S ribosomal subunit.

Its function is as follows. One of two assembly initiator proteins, it binds directly to the 5'-end of the 23S rRNA, where it nucleates assembly of the 50S subunit. One of the proteins that surrounds the polypeptide exit tunnel on the outside of the subunit. The polypeptide is Large ribosomal subunit protein uL24 (Ureaplasma parvum serovar 3 (strain ATCC 27815 / 27 / NCTC 11736)).